Here is a 275-residue protein sequence, read N- to C-terminus: Small ribosomal subunit protein uS3 (275 aa).

The KH type-2 domain occupies 39–107 (VRIYLKKKLK…PVHVNIEEIR (69 aa)). The disordered stretch occupies residues 216–275 (AAATSAEPAAEEKKTRRAPSKTAARKPAAGTDKPLVAAKPAVKRVRKVETPAADTQKSGE).

It belongs to the universal ribosomal protein uS3 family. As to quaternary structure, part of the 30S ribosomal subunit. Forms a tight complex with proteins S10 and S14.

Functionally, binds the lower part of the 30S subunit head. Binds mRNA in the 70S ribosome, positioning it for translation. The sequence is that of Small ribosomal subunit protein uS3 from Polynucleobacter asymbioticus (strain DSM 18221 / CIP 109841 / QLW-P1DMWA-1) (Polynucleobacter necessarius subsp. asymbioticus).